Reading from the N-terminus, the 243-residue chain is Pyridoxine 5'-phosphate synthase (243 aa).

Asn-9 lines the 3-amino-2-oxopropyl phosphate pocket. A 1-deoxy-D-xylulose 5-phosphate-binding site is contributed by 11 to 12; that stretch reads DH. Arg-20 is a 3-amino-2-oxopropyl phosphate binding site. Residue His-45 is the Proton acceptor of the active site. Residues Arg-47 and His-52 each coordinate 1-deoxy-D-xylulose 5-phosphate. Residue Glu-72 is the Proton acceptor of the active site. Thr-102 contributes to the 1-deoxy-D-xylulose 5-phosphate binding site. The active-site Proton donor is His-193. 3-amino-2-oxopropyl phosphate contacts are provided by residues Gly-194 and 215 to 216; that span reads GH.

This sequence belongs to the PNP synthase family. In terms of assembly, homooctamer; tetramer of dimers.

It is found in the cytoplasm. It catalyses the reaction 3-amino-2-oxopropyl phosphate + 1-deoxy-D-xylulose 5-phosphate = pyridoxine 5'-phosphate + phosphate + 2 H2O + H(+). Its pathway is cofactor biosynthesis; pyridoxine 5'-phosphate biosynthesis; pyridoxine 5'-phosphate from D-erythrose 4-phosphate: step 5/5. Its function is as follows. Catalyzes the complicated ring closure reaction between the two acyclic compounds 1-deoxy-D-xylulose-5-phosphate (DXP) and 3-amino-2-oxopropyl phosphate (1-amino-acetone-3-phosphate or AAP) to form pyridoxine 5'-phosphate (PNP) and inorganic phosphate. In Vibrio parahaemolyticus serotype O3:K6 (strain RIMD 2210633), this protein is Pyridoxine 5'-phosphate synthase.